The primary structure comprises 107 residues: Nucleoid-associated protein PPA0205 (107 aa).

This sequence belongs to the YbaB/EbfC family. In terms of assembly, homodimer.

It localises to the cytoplasm. The protein resides in the nucleoid. In terms of biological role, binds to DNA and alters its conformation. May be involved in regulation of gene expression, nucleoid organization and DNA protection. The chain is Nucleoid-associated protein PPA0205 from Cutibacterium acnes (strain DSM 16379 / KPA171202) (Propionibacterium acnes).